The primary structure comprises 347 residues: Methionine import ATP-binding protein MetN (347 aa).

The 246-residue stretch at 2–247 (ITTTGLTKVY…PGSELASALF (246 aa)) folds into the ABC transporter domain. An ATP-binding site is contributed by 38–45 (GQSGAGKS).

This sequence belongs to the ABC transporter superfamily. Methionine importer (TC 3.A.1.24) family. The complex is composed of two ATP-binding proteins (MetN), two transmembrane proteins (MetI) and a solute-binding protein (MetQ).

It localises to the cell membrane. It catalyses the reaction L-methionine(out) + ATP + H2O = L-methionine(in) + ADP + phosphate + H(+). The catalysed reaction is D-methionine(out) + ATP + H2O = D-methionine(in) + ADP + phosphate + H(+). Its function is as follows. Part of the ABC transporter complex MetNIQ involved in methionine import. Responsible for energy coupling to the transport system. In Streptomyces avermitilis (strain ATCC 31267 / DSM 46492 / JCM 5070 / NBRC 14893 / NCIMB 12804 / NRRL 8165 / MA-4680), this protein is Methionine import ATP-binding protein MetN.